The primary structure comprises 586 residues: MSQATQDSVREDGVIASVSGPVVTARGLDARMNDVVYVGDEGLMGEVIEIEGDLTTIQVYEETSGVGPGEPVESTGEPLTVDLGPGMMDAIYDGVQRPLDVLESKMDSAFLDRGVDAPGIDLDEKWEFEPTVSEGDEVAPGDVVGTVPETVTIEHKVMVPPDFGGGEVVAVEEGEFSVTEAVVELDSGEEITMHQEWPVRQARPAAEKKTPREPLVSGQRILDGLFPIAKGGTAAIPGPFGSGKTVTQHQLAKWADADIVVYVGCGERGNEMTEVIEDFPELDDPKTGNPLMARTCLIANTSNMPVAARESCIYTGITIAEYYRDMGYDVALMADSTSRWAEAMREISSRLEEMPGEEGYPAYLAARLSEFYERAGYFTTVNGEEGSVSVIGAVSPPGGDFSEPVTQNTLRIVKTFWALDADLAERRHFPAINWNESYSLYQEQLDPWFVENVEDDWAEERQWAVDVLDEENELQEIVQLVGKDALPEDQQLTLEIARYLREAYLQQNAFHPTDTYCSPEKTYGILTAIHAFNDEAFKALEAGVPVEEIQAIEAAPRLNRIGVQEDWEAYIEDLKAEITEQLRELY.

ATP is bound at residue 238–245; that stretch reads GPFGSGKT.

Belongs to the ATPase alpha/beta chains family. In terms of assembly, has multiple subunits with at least A(3), B(3), C, D, E, F, H, I and proteolipid K(x).

Its subcellular location is the cell membrane. The enzyme catalyses ATP + H2O + 4 H(+)(in) = ADP + phosphate + 5 H(+)(out). In terms of biological role, component of the A-type ATP synthase that produces ATP from ADP in the presence of a proton gradient across the membrane. The A chain is the catalytic subunit. This Haloferax volcanii (strain ATCC 29605 / DSM 3757 / JCM 8879 / NBRC 14742 / NCIMB 2012 / VKM B-1768 / DS2) (Halobacterium volcanii) protein is A-type ATP synthase subunit A.